The chain runs to 105 residues: Large ribosomal subunit protein bL21c (105 aa).

This sequence belongs to the bacterial ribosomal protein bL21 family. In terms of assembly, part of the 50S ribosomal subunit.

The protein resides in the plastid. Its subcellular location is the chloroplast. In terms of biological role, this protein binds to 23S rRNA. This chain is Large ribosomal subunit protein bL21c, found in Thalassiosira pseudonana (Marine diatom).